The sequence spans 500 residues: L-arabinose isomerase (500 aa).

Mn(2+)-binding residues include Glu306, Glu333, His350, and His450.

The protein belongs to the arabinose isomerase family. Homohexamer. The cofactor is Mn(2+).

The enzyme catalyses beta-L-arabinopyranose = L-ribulose. It functions in the pathway carbohydrate degradation; L-arabinose degradation via L-ribulose; D-xylulose 5-phosphate from L-arabinose (bacterial route): step 1/3. Its function is as follows. Catalyzes the conversion of L-arabinose to L-ribulose. This chain is L-arabinose isomerase, found in Yersinia pseudotuberculosis serotype I (strain IP32953).